Reading from the N-terminus, the 345-residue chain is Phosphoribosylformylglycinamidine cyclo-ligase (345 aa).

This sequence belongs to the AIR synthase family.

The protein resides in the cytoplasm. It catalyses the reaction 2-formamido-N(1)-(5-O-phospho-beta-D-ribosyl)acetamidine + ATP = 5-amino-1-(5-phospho-beta-D-ribosyl)imidazole + ADP + phosphate + H(+). The protein operates within purine metabolism; IMP biosynthesis via de novo pathway; 5-amino-1-(5-phospho-D-ribosyl)imidazole from N(2)-formyl-N(1)-(5-phospho-D-ribosyl)glycinamide: step 2/2. This chain is Phosphoribosylformylglycinamidine cyclo-ligase, found in Shewanella denitrificans (strain OS217 / ATCC BAA-1090 / DSM 15013).